A 181-amino-acid polypeptide reads, in one-letter code: Cyclic AMP-dependent transcription factor ATF-3 (181 aa).

The segment at 76–96 is disordered; sequence VTKSEVAPEEDERKRRRRERN. Residue Lys-78 forms a Glycyl lysine isopeptide (Lys-Gly) (interchain with G-Cter in SUMO2) linkage. Residues 86–149 enclose the bZIP domain; that stretch reads DERKRRRRER…QHLIYMLNLH (64 aa). The tract at residues 88-110 is basic motif; that stretch reads RKRRRRERNKIAAAKCRNKKKEK. A leucine-zipper region spans residues 114 to 142; sequence LQKESEKLESVNAELKAQIEELKNEKQHL. Thr-162 bears the Phosphothreonine mark. Lys-175 participates in a covalent cross-link: Glycyl lysine isopeptide (Lys-Gly) (interchain with G-Cter in SUMO2).

This sequence belongs to the bZIP family. ATF subfamily. In terms of assembly, ATF3 alone can bind DNA, but it preferentially forms heteromeric complexes with JUN and JUNB and does not interact with FOS. In terms of tissue distribution, expressed in tissues containing skeletal muscle or smooth muscle. Expressed in cutaneous and muscular sensory neurons.

The protein resides in the nucleus. This protein binds the cAMP response element (CRE) (consensus: 5'-GTGACGT[AC][AG]-3'), a sequence present in many viral and cellular promoters. Represses transcription from promoters with ATF sites. It may repress transcription by stabilizing the binding of inhibitory cofactors at the promoter. The sequence is that of Cyclic AMP-dependent transcription factor ATF-3 (Atf3) from Rattus norvegicus (Rat).